The chain runs to 194 residues: Methyl-CpG-binding domain protein 3-like 1 (194 aa).

A transcription repressor region spans residues 1 to 104 (MAKSSQRKQR…KLVPSYTGGS (104 aa)).

The protein belongs to the MBD3L family. In terms of tissue distribution, highly expressed in testis. Detected at low levels in pancreas. Not detected in the other tissues tested.

It is found in the nucleus. Transcriptional repressor. The sequence is that of Methyl-CpG-binding domain protein 3-like 1 (MBD3L1) from Homo sapiens (Human).